Here is a 272-residue protein sequence, read N- to C-terminus: 3-methyl-2-oxobutanoate hydroxymethyltransferase (272 aa).

Mg(2+) contacts are provided by Asp-43 and Asp-82. 3-methyl-2-oxobutanoate is bound by residues 43–44, Asp-82, and Lys-112; that span reads DS. Residue Glu-114 coordinates Mg(2+). The active-site Proton acceptor is the Glu-179.

This sequence belongs to the PanB family. In terms of assembly, homodecamer; pentamer of dimers. Mg(2+) serves as cofactor.

The protein resides in the cytoplasm. It carries out the reaction 3-methyl-2-oxobutanoate + (6R)-5,10-methylene-5,6,7,8-tetrahydrofolate + H2O = 2-dehydropantoate + (6S)-5,6,7,8-tetrahydrofolate. The protein operates within cofactor biosynthesis; (R)-pantothenate biosynthesis; (R)-pantoate from 3-methyl-2-oxobutanoate: step 1/2. Catalyzes the reversible reaction in which hydroxymethyl group from 5,10-methylenetetrahydrofolate is transferred onto alpha-ketoisovalerate to form ketopantoate. The polypeptide is 3-methyl-2-oxobutanoate hydroxymethyltransferase (Staphylococcus aureus (strain COL)).